The chain runs to 426 residues: UDP-N-acetylglucosamine 1-carboxyvinyltransferase (426 aa).

22–23 (KN) contacts phosphoenolpyruvate. Arg-99 serves as a coordination point for UDP-N-acetyl-alpha-D-glucosamine. Cys-123 acts as the Proton donor in catalysis. The residue at position 123 (Cys-123) is a 2-(S-cysteinyl)pyruvic acid O-phosphothioketal. UDP-N-acetyl-alpha-D-glucosamine is bound by residues 128 to 132 (RPIDL), Asp-313, and Ile-335.

It belongs to the EPSP synthase family. MurA subfamily.

The protein localises to the cytoplasm. The enzyme catalyses phosphoenolpyruvate + UDP-N-acetyl-alpha-D-glucosamine = UDP-N-acetyl-3-O-(1-carboxyvinyl)-alpha-D-glucosamine + phosphate. It participates in cell wall biogenesis; peptidoglycan biosynthesis. Its function is as follows. Cell wall formation. Adds enolpyruvyl to UDP-N-acetylglucosamine. The polypeptide is UDP-N-acetylglucosamine 1-carboxyvinyltransferase (Zymomonas mobilis subsp. mobilis (strain ATCC 31821 / ZM4 / CP4)).